Consider the following 149-residue polypeptide: Small ribosomal subunit protein uS17c (149 aa).

The N-terminal 49 residues, M1–A49, are a transit peptide targeting the chloroplast.

Belongs to the universal ribosomal protein uS17 family. In terms of assembly, part of the 30S ribosomal subunit.

It localises to the plastid. Its subcellular location is the chloroplast. One of the primary rRNA binding proteins, it binds specifically to the 5'-end of 16S ribosomal RNA. Required for optimal plastid performance in terms of photosynthesis and growth. Required for the translation of plastid mRNAs. Plays a critical role in biosynthesis of thylakoid membrane proteins encoded by chloroplast genes. This is Small ribosomal subunit protein uS17c (RPS17) from Arabidopsis thaliana (Mouse-ear cress).